We begin with the raw amino-acid sequence, 207 residues long: MPMRKRHFYRLLPLASLLLAACTIPVSKGPATSPTSPQWRQHEQQLQQLGQFETRGAFAYLSDKQKVYARFFWQQTSPERYRLLLTNPLGSTELELVVQPGVTQLTDNQGKRYVSDDPQEMIQKLTGMSIPLESLRQWILGLPGDTPNFTLDDKYRLKKLTYQQNGVTWVVDYQEYNTQVTPPLPSRLELNQDGQRIKLKMDSWTIK.

The N-terminal stretch at 1–21 (MPMRKRHFYRLLPLASLLLAA) is a signal peptide. Residue C22 is the site of N-palmitoyl cysteine attachment. C22 is lipidated: S-diacylglycerol cysteine.

It belongs to the LolB family. In terms of assembly, monomer.

The protein localises to the cell outer membrane. Functionally, plays a critical role in the incorporation of lipoproteins in the outer membrane after they are released by the LolA protein. The protein is Outer-membrane lipoprotein LolB of Yersinia pseudotuberculosis serotype IB (strain PB1/+).